The chain runs to 345 residues: Holliday junction branch migration complex subunit RuvB (345 aa).

Positions 1-22 (MIETDALSGGTPRRLVTQQPLS) are disordered. Residues 4–193 (TDALSGGTPR…FGIVARLEFY (190 aa)) are large ATPase domain (RuvB-L). ATP-binding positions include leucine 32, arginine 33, glycine 74, lysine 77, threonine 78, threonine 79, 140 to 142 (EDY), arginine 183, tyrosine 193, and arginine 230. Threonine 78 serves as a coordination point for Mg(2+). The segment at 194-264 (TPEELTRIVR…VADAALSMLD (71 aa)) is small ATPAse domain (RuvB-S). The tract at residues 267–345 (PAGLDVMDRK…HFGFVPPERV (79 aa)) is head domain (RuvB-H). Arginine 322 and arginine 327 together coordinate DNA.

It belongs to the RuvB family. In terms of assembly, homohexamer. Forms an RuvA(8)-RuvB(12)-Holliday junction (HJ) complex. HJ DNA is sandwiched between 2 RuvA tetramers; dsDNA enters through RuvA and exits via RuvB. An RuvB hexamer assembles on each DNA strand where it exits the tetramer. Each RuvB hexamer is contacted by two RuvA subunits (via domain III) on 2 adjacent RuvB subunits; this complex drives branch migration. In the full resolvosome a probable DNA-RuvA(4)-RuvB(12)-RuvC(2) complex forms which resolves the HJ.

It localises to the cytoplasm. It catalyses the reaction ATP + H2O = ADP + phosphate + H(+). In terms of biological role, the RuvA-RuvB-RuvC complex processes Holliday junction (HJ) DNA during genetic recombination and DNA repair, while the RuvA-RuvB complex plays an important role in the rescue of blocked DNA replication forks via replication fork reversal (RFR). RuvA specifically binds to HJ cruciform DNA, conferring on it an open structure. The RuvB hexamer acts as an ATP-dependent pump, pulling dsDNA into and through the RuvAB complex. RuvB forms 2 homohexamers on either side of HJ DNA bound by 1 or 2 RuvA tetramers; 4 subunits per hexamer contact DNA at a time. Coordinated motions by a converter formed by DNA-disengaged RuvB subunits stimulates ATP hydrolysis and nucleotide exchange. Immobilization of the converter enables RuvB to convert the ATP-contained energy into a lever motion, pulling 2 nucleotides of DNA out of the RuvA tetramer per ATP hydrolyzed, thus driving DNA branch migration. The RuvB motors rotate together with the DNA substrate, which together with the progressing nucleotide cycle form the mechanistic basis for DNA recombination by continuous HJ branch migration. Branch migration allows RuvC to scan DNA until it finds its consensus sequence, where it cleaves and resolves cruciform DNA. The polypeptide is Holliday junction branch migration complex subunit RuvB (Laribacter hongkongensis (strain HLHK9)).